A 459-amino-acid polypeptide reads, in one-letter code: Serine carboxypeptidase-like 27 (459 aa).

Residues 1 to 20 form the signal peptide; it reads MDYSFLLIILLLTISTSCCA. 3 disulfides stabilise this stretch: Cys-91/Cys-344, Cys-252/Cys-264, and Cys-288/Cys-312. Asn-142 carries N-linked (GlcNAc...) asparagine glycosylation. The active site involves Ser-184. Asn-289 and Asn-333 each carry an N-linked (GlcNAc...) asparagine glycan. Catalysis depends on residues Asp-381 and His-433.

Belongs to the peptidase S10 family. As to expression, ubiquitous.

It localises to the secreted. Its function is as follows. Probable carboxypeptidase. The sequence is that of Serine carboxypeptidase-like 27 (SCPL27) from Arabidopsis thaliana (Mouse-ear cress).